Here is a 191-residue protein sequence, read N- to C-terminus: Small ribosomal subunit protein uS11m (191 aa).

Residues 37–62 (PRLEDSAARQNTEREAAPSRFSLYPP) form a disordered region. The span at 38 to 53 (RLEDSAARQNTEREAA) shows a compositional bias: basic and acidic residues.

This sequence belongs to the universal ribosomal protein uS11 family. In terms of assembly, component of the mitochondrial ribosome small subunit (28S) which comprises a 12S rRNA and about 30 distinct proteins.

The protein resides in the mitochondrion. In Mus musculus (Mouse), this protein is Small ribosomal subunit protein uS11m (Mrps11).